We begin with the raw amino-acid sequence, 443 residues long: Probable glycine dehydrogenase (decarboxylating) subunit 1 (443 aa).

It belongs to the GcvP family. N-terminal subunit subfamily. The glycine cleavage system is composed of four proteins: P, T, L and H. In this organism, the P 'protein' is a heterodimer of two subunits.

It catalyses the reaction N(6)-[(R)-lipoyl]-L-lysyl-[glycine-cleavage complex H protein] + glycine + H(+) = N(6)-[(R)-S(8)-aminomethyldihydrolipoyl]-L-lysyl-[glycine-cleavage complex H protein] + CO2. In terms of biological role, the glycine cleavage system catalyzes the degradation of glycine. The P protein binds the alpha-amino group of glycine through its pyridoxal phosphate cofactor; CO(2) is released and the remaining methylamine moiety is then transferred to the lipoamide cofactor of the H protein. This chain is Probable glycine dehydrogenase (decarboxylating) subunit 1, found in Koribacter versatilis (strain Ellin345).